Consider the following 68-residue polypeptide: Antimicrobial peptide UyCT3 (68 aa).

A signal peptide spans 1–23; it reads MKNQFVLLLLAIVFLQMIFQSDA. Position 36 is a phenylalanine amide (Phe-36). Residues 40–68 constitute a propeptide that is removed on maturation; the sequence is GLENMDKFDELFDGDLSEADLDFLKELMR.

The protein belongs to the non-disulfide-bridged peptide (NDBP) superfamily. Short antimicrobial peptide (group 4) family. In terms of processing, the non-amidated UyCT3 does not show antimicrobial activity. Expressed by the venom gland.

The protein resides in the secreted. It localises to the target cell membrane. Its function is as follows. Antimicrobial peptide that inhibits the growth of Gram-positive (S.aureus, MIC=10 uM) and Gram-negative bacteria (E.coli, MIC=15 uM and P.aeruginosa, MIC=6 uM). It also shows 35% of hemolysis when 15 uM are tested (95% at 50 uM). This Urodacus yaschenkoi (Inland robust scorpion) protein is Antimicrobial peptide UyCT3.